Reading from the N-terminus, the 167-residue chain is Large ribosomal subunit protein uL10 (167 aa).

This sequence belongs to the universal ribosomal protein uL10 family. In terms of assembly, part of the ribosomal stalk of the 50S ribosomal subunit. The N-terminus interacts with L11 and the large rRNA to form the base of the stalk. The C-terminus forms an elongated spine to which L12 dimers bind in a sequential fashion forming a multimeric L10(L12)X complex.

Forms part of the ribosomal stalk, playing a central role in the interaction of the ribosome with GTP-bound translation factors. The sequence is that of Large ribosomal subunit protein uL10 from Latilactobacillus sakei subsp. sakei (strain 23K) (Lactobacillus sakei subsp. sakei).